The chain runs to 265 residues: Undecaprenyl-diphosphatase (265 aa).

8 helical membrane-spanning segments follow: residues 1–21 (MDFL…FLPI), 39–59 (QGVG…ILYF), 87–107 (WAVV…LDYI), 110–130 (ALRA…LLAA), 144–164 (IGFK…IPGT), 187–207 (FSFF…LLTI), 217–237 (LGFL…IHFF), and 244–264 (FGMW…YLLF).

It belongs to the UppP family.

It is found in the cell inner membrane. It carries out the reaction di-trans,octa-cis-undecaprenyl diphosphate + H2O = di-trans,octa-cis-undecaprenyl phosphate + phosphate + H(+). Functionally, catalyzes the dephosphorylation of undecaprenyl diphosphate (UPP). Confers resistance to bacitracin. This Idiomarina loihiensis (strain ATCC BAA-735 / DSM 15497 / L2-TR) protein is Undecaprenyl-diphosphatase.